Here is a 781-residue protein sequence, read N- to C-terminus: ATP-dependent 6-phosphofructokinase (781 aa).

The N-terminal catalytic PFK domain 1 stretch occupies residues M1 to K394. ATP-binding positions include G27, R90–C91, and G120–S123. Mg(2+) is bound at residue D121. Substrate contacts are provided by residues S166–D168, R203, M210–R212, E266, R294, and H300–R303. D168 acts as the Proton acceptor in catalysis. The interdomain linker stretch occupies residues I395–L409. The segment at R410–K781 is C-terminal regulatory PFK domain 2. Beta-D-fructose 2,6-bisphosphate contacts are provided by residues R479, T537–N541, R575, M582–G584, D638, R664, H670–Q673, and R745.

Belongs to the phosphofructokinase type A (PFKA) family. ATP-dependent PFK group I subfamily. Eukaryotic two domain clade 'E' sub-subfamily. As to quaternary structure, homotetramer. Mg(2+) is required as a cofactor.

It is found in the cytoplasm. It catalyses the reaction beta-D-fructose 6-phosphate + ATP = beta-D-fructose 1,6-bisphosphate + ADP + H(+). It participates in carbohydrate degradation; glycolysis; D-glyceraldehyde 3-phosphate and glycerone phosphate from D-glucose: step 3/4. With respect to regulation, allosterically activated by ADP, AMP, or fructose 2,6-bisphosphate, and allosterically inhibited by ATP or citrate. Functionally, catalyzes the phosphorylation of D-fructose 6-phosphate to fructose 1,6-bisphosphate by ATP, the first committing step of glycolysis. The sequence is that of ATP-dependent 6-phosphofructokinase (PFK) from Schistosoma mansoni (Blood fluke).